Reading from the N-terminus, the 70-residue chain is Large ribosomal subunit protein bL31 (70 aa).

Positions 16, 18, 37, and 40 each coordinate Zn(2+).

It belongs to the bacterial ribosomal protein bL31 family. Type A subfamily. Part of the 50S ribosomal subunit. Zn(2+) serves as cofactor.

In terms of biological role, binds the 23S rRNA. The chain is Large ribosomal subunit protein bL31 from Shewanella baltica (strain OS223).